The primary structure comprises 967 residues: Regulator of G-protein signaling 3 (967 aa).

The region spanning 18 to 95 (QITIRRGKDG…EIILLVWRVV (78 aa)) is the PDZ domain. Residues 115 to 135 (THDLLSPPNKREKNCTHGAPT) form a disordered region. The residue at position 167 (Arg-167) is an Omega-N-methylarginine. Positions 389 to 705 (QLAATPTERK…EGGLSLRVQN (317 aa)) are disordered. Composition is skewed to polar residues over residues 476–486 (LPSSKNPSPSQ), 512–549 (SPSS…TEVP), and 577–597 (SSAS…QGSL). The span at 650–676 (GEDEDAEEGEEGEEGEEDEEDDTNDDN) shows a compositional bias: acidic residues. A compositionally biased stretch (basic and acidic residues) spans 677–687 (YGDRNEAKRSS). Phosphoserine is present on residues Ser-713, Ser-716, Ser-748, and Ser-777. The disordered stretch occupies residues 807-830 (FRRRNESPGAQPAGKADKTTKSFK). The span at 821–830 (KADKTTKSFK) shows a compositional bias: basic and acidic residues. One can recognise an RGS domain in the interval 842–967 (SLEKLLLHKY…INQKKMSPPL (126 aa)).

Binds EFNB1 and EFNB2. Binds the GNB1-GNG2 heterodimer. Binds ESR1. Phosphorylated by cyclic GMP-dependent protein kinase. Post-translationally, ISGylated. In terms of tissue distribution, detected in kidney, uterus, ovary, heart, brain, spleen, lung and testis.

The protein resides in the cytoplasm. Its subcellular location is the membrane. The protein localises to the nucleus. Down-regulates signaling from heterotrimeric G-proteins by increasing the GTPase activity of the alpha subunits, thereby driving them into their inactive GDP-bound form. Down-regulates G-protein-mediated release of inositol phosphates and activation of MAP kinases. This is Regulator of G-protein signaling 3 (Rgs3) from Rattus norvegicus (Rat).